We begin with the raw amino-acid sequence, 66 residues long: MARGKDARVTVILECTNCVRGGVTKESTGISRYITEKNRHNTPGQLELKKFCPYCYKQTIHGEIKK.

It belongs to the bacterial ribosomal protein bL33 family.

It is found in the plastid. Its subcellular location is the chloroplast. This chain is Large ribosomal subunit protein bL33c, found in Oenothera argillicola (Appalachian evening primrose).